We begin with the raw amino-acid sequence, 260 residues long: Hydroxyethylthiazole kinase 1 (260 aa).

M39 lines the substrate pocket. The ATP site is built by R115 and T160. Position 187 (G187) interacts with substrate.

The protein belongs to the Thz kinase family. Requires Mg(2+) as cofactor.

It catalyses the reaction 5-(2-hydroxyethyl)-4-methylthiazole + ATP = 4-methyl-5-(2-phosphooxyethyl)-thiazole + ADP + H(+). Its pathway is cofactor biosynthesis; thiamine diphosphate biosynthesis; 4-methyl-5-(2-phosphoethyl)-thiazole from 5-(2-hydroxyethyl)-4-methylthiazole: step 1/1. In terms of biological role, catalyzes the phosphorylation of the hydroxyl group of 4-methyl-5-beta-hydroxyethylthiazole (THZ). The polypeptide is Hydroxyethylthiazole kinase 1 (Streptococcus pneumoniae (strain 70585)).